Here is a 348-residue protein sequence, read N- to C-terminus: Glucokinase (348 aa).

14–19 lines the ATP pocket; it reads GDVGGS. The tract at residues 327–348 is disordered; the sequence is SDPAPVAAPTHPRGGTAGDMHA.

Belongs to the bacterial glucokinase family.

It is found in the cytoplasm. The enzyme catalyses D-glucose + ATP = D-glucose 6-phosphate + ADP + H(+). In Chromobacterium violaceum (strain ATCC 12472 / DSM 30191 / JCM 1249 / CCUG 213 / NBRC 12614 / NCIMB 9131 / NCTC 9757 / MK), this protein is Glucokinase.